A 282-amino-acid chain; its full sequence is NADPH-dependent 7-cyano-7-deazaguanine reductase (282 aa).

88–90 (IES) is a substrate binding site. Position 90 to 91 (90 to 91 (SK)) interacts with NADPH. The active-site Thioimide intermediate is the cysteine 190. The active-site Proton donor is aspartate 197. 229 to 230 (HE) contacts substrate. 258–259 (RG) contributes to the NADPH binding site.

This sequence belongs to the GTP cyclohydrolase I family. QueF type 2 subfamily. In terms of assembly, homodimer.

It is found in the cytoplasm. It catalyses the reaction 7-aminomethyl-7-carbaguanine + 2 NADP(+) = 7-cyano-7-deazaguanine + 2 NADPH + 3 H(+). It functions in the pathway tRNA modification; tRNA-queuosine biosynthesis. Functionally, catalyzes the NADPH-dependent reduction of 7-cyano-7-deazaguanine (preQ0) to 7-aminomethyl-7-deazaguanine (preQ1). This chain is NADPH-dependent 7-cyano-7-deazaguanine reductase, found in Escherichia coli (strain UTI89 / UPEC).